A 415-amino-acid polypeptide reads, in one-letter code: MASNVDKFSSRFYLNVNKEELKKEYVGKTIQQVPTPGFVIDEAIFEKNCNRMLDRASDIGVTFRAHVKTHKTIEGTLLQLGDGRTKAVVVSTLMEGFSLIPLILEGKIDDLLYGLPVAKSRLPELYELSKIVPHLRLMIDNPKQLDILREFTSTLPDDAKPWSIFVKIDMGTHRAGVTNDSQVVKDLISTILSDKSLFDLFGFYCHAGHSYASRSIDAASEFLCAEIDAANTAAKFATSIDPSLKLTLSVGATPTAHSVSPKVKELLPTLSGKLEVHAGNYPMNDVQQMITKCISQADVADYVFAEVISNYPGRNGEPGEVLVNAGVIAMSRETSPEGDFGIVITPGFESFYVDRLSQEHGILKSKDPKATLPDASQVLCIIPNHSCITAAAFPWYYITKGSDVITDIWVPWKGW.

Lys68 carries the N6-(pyridoxal phosphate)lysine modification. Pyridoxal 5'-phosphate contacts are provided by Tyr204, Tyr211, Thr253, Gly279, and Asn280. Positions 385 and 387 each coordinate Zn(2+).

Belongs to the DSD1 family. In terms of assembly, homodimer. Pyridoxal 5'-phosphate serves as cofactor. The cofactor is Zn(2+).

It is found in the cytoplasm. Its subcellular location is the nucleus. The catalysed reaction is D-serine = pyruvate + NH4(+). Functionally, catalyzes the conversion of D-serine to pyruvate and ammonia. May play a role in D-serine detoxification. The chain is D-serine dehydratase from Schizosaccharomyces pombe (strain 972 / ATCC 24843) (Fission yeast).